The primary structure comprises 364 residues: Aminomethyltransferase (364 aa).

Belongs to the GcvT family. As to quaternary structure, the glycine cleavage system is composed of four proteins: P, T, L and H.

It carries out the reaction N(6)-[(R)-S(8)-aminomethyldihydrolipoyl]-L-lysyl-[protein] + (6S)-5,6,7,8-tetrahydrofolate = N(6)-[(R)-dihydrolipoyl]-L-lysyl-[protein] + (6R)-5,10-methylene-5,6,7,8-tetrahydrofolate + NH4(+). In terms of biological role, the glycine cleavage system catalyzes the degradation of glycine. This chain is Aminomethyltransferase, found in Escherichia coli O157:H7.